The chain runs to 63 residues: Male-specific sperm protein Mst84Da (63 aa).

The protein belongs to the MST(3)CGP family. As to expression, testis.

This Drosophila melanogaster (Fruit fly) protein is Male-specific sperm protein Mst84Da (Mst84Da).